The sequence spans 323 residues: Thymidine kinase (323 aa).

11 to 18 (GPHGLGKT) is a binding site for ATP. Catalysis depends on Glu36, which acts as the Proton acceptor. Tyr54 and Gln78 together coordinate substrate. Arg169 lines the ATP pocket. Arg175 serves as a coordination point for substrate.

Belongs to the herpesviridae thymidine kinase family. As to quaternary structure, homodimer.

It catalyses the reaction thymidine + ATP = dTMP + ADP + H(+). In terms of biological role, catalyzes the transfer of the gamma-phospho group of ATP to thymidine to generate dTMP in the salvage pathway of pyrimidine synthesis. The dTMP serves as a substrate for DNA polymerase during viral DNA replication. Allows the virus to be reactivated and to grow in non-proliferative cells lacking a high concentration of phosphorylated nucleic acid precursors. The sequence is that of Thymidine kinase from Bos taurus (Bovine).